A 158-amino-acid polypeptide reads, in one-letter code: Mitotic-spindle organizing protein 2B (158 aa).

Phosphoserine is present on S34. A disordered region spans residues 84–158 (RLASEPQDPA…PGKSPTRGST (75 aa)). Residues 111–122 (GSAALGGALALA) are compositionally biased toward low complexity. Positions 128–140 (EGSSQRMPRQPSA) are enriched in polar residues. Phosphoserine is present on S152.

The protein belongs to the MOZART2 family. Associates with the gamma-tubulin ring complex (gTuRC) consisting of TUBGCP2, TUBGCP3, TUBGCP4, TUBGCP5 and TUBGCP6 and gamma-tubulin TUBG1 or TUBG2; within the complex, interacts with TUBGCP2; the interaction plays a role in gTuRC activation. Interacts with TUBG1.

The protein localises to the cytoplasm. The protein resides in the cytoskeleton. It localises to the microtubule organizing center. It is found in the centrosome. Its subcellular location is the spindle. Its function is as follows. Required for the recruitment and the assembly of the gamma-tubulin ring complex (gTuRC) at the centrosome. The gTuRC regulates the minus-end nucleation of alpha-beta tubulin heterodimers that grow into microtubule protafilaments, a critical step in centrosome duplication and spindle formation. The sequence is that of Mitotic-spindle organizing protein 2B (MZT2B) from Homo sapiens (Human).